The following is a 242-amino-acid chain: MTMATPFSGAANSIVAARTVLITGVSKGLGRALALELAKRGHTVIGCARSQEKLTALQSELSSSTNHLLLTADVKSNSSVEEMAHTIVEKKGVPDIIVNNAGTINKNSKIWEVSAEDFDNVMDTNVKGVANVLRHFIPLMLPRKQGIIVNMSSGWGRSGAALVAPYCASKWAIEGLSRAVAKEVVEGMAVVALNPGVINTELLTSCFGNSASLYQAPDAWAVKAATMILNLTAGDNGGSLTV.

The residue at position 2 (threonine 2) is an N-acetylthreonine. Residue 21–50 (LITGVSKGLGRALALELAKRGHTVIGCARS) coordinates NADP(+). Residue serine 153 coordinates substrate. The Proton acceptor role is filled by tyrosine 166. Lysine 170 is a binding site for NADP(+).

Belongs to the short-chain dehydrogenases/reductases (SDR) family. In terms of assembly, homodimer. As to expression, mostly expressed in seeds, and, to a lower extent, in roots, leaves, flowers and siliques.

The protein localises to the cytoplasm. In terms of biological role, NADPH-dependent pterin aldehyde reductase involved in pterin aldehyde salvage during folate turnover. Catalyzes the reduction of diverse aromatic and aliphatic aldehydes (e.g. acetaldehyde, n-propanal, 1-naphthaldehyde, benzaldehyde, cinnamaldehyde, n-butanal, n-hexanal, n-pentanal, 2-naphthaldehyde, n-octanal, n-nonanal and n-heptanal), in addition to the conversion of pterin-6-aldehyde (PtCHO) to 6-hydroxymethylpterin (PtCH(2)OH), and the conversion of dihydropterin-6-aldehyde (H(2)PtCHO) to 6-hydroxymethyldihydropterin (H(2)PtCH(2)OH). Cannot reduce the pterin ring. In Arabidopsis thaliana (Mouse-ear cress), this protein is NADPH-dependent pterin aldehyde reductase.